Consider the following 474-residue polypeptide: Cysteine protease ATG4A (474 aa).

Residues 1 to 32 (MTSLPGRGVSPSSSDPLCEGNAAPSSSSSSGQ) form a disordered region. The Nucleophile role is filled by cysteine 161. Active-site residues include aspartate 358 and histidine 360. A compositionally biased stretch (polar residues) spans 439-449 (KQMYNEESSSG). The segment at 439 to 474 (KQMYNEESSSGDGMDSINVEGLDGSGETGEEEWQIL) is disordered.

The protein belongs to the peptidase C54 family. As to quaternary structure, interacts with ATG8.

It localises to the cytoplasm. It catalyses the reaction [protein]-C-terminal L-amino acid-glycyl-phosphatidylethanolamide + H2O = [protein]-C-terminal L-amino acid-glycine + a 1,2-diacyl-sn-glycero-3-phosphoethanolamine. In terms of biological role, cysteine protease that plays a key role in autophagy by mediating both proteolytic activation and delipidation of ATG8 family proteins. The protease activity is required for proteolytic activation of ATG8 family proteins: cleaves the C-terminal amino acid of ATG8 proteins to reveal a C-terminal glycine. Exposure of the glycine at the C-terminus is essential for ATG8 proteins conjugation to phosphatidylethanolamine (PE) and insertion to membranes, which is necessary for autophagy. In addition to the protease activity, also mediates delipidation of PE-conjugated ATG8 proteins. This chain is Cysteine protease ATG4A (ATG4A), found in Oryza sativa subsp. japonica (Rice).